The following is a 340-amino-acid chain: Probable serine acetyltransferase 5 (340 aa).

Low complexity-rich tracts occupy residues 1–17 (MLVV…RVAA) and 54–64 (PAEVVPAFAPP). The disordered stretch occupies residues 1–67 (MLVVVARKSS…VPAFAPPESE (67 aa)).

This sequence belongs to the transferase hexapeptide repeat family. As to quaternary structure, homomultimer.

The catalysed reaction is L-serine + acetyl-CoA = O-acetyl-L-serine + CoA. It functions in the pathway amino-acid biosynthesis; L-cysteine biosynthesis; L-cysteine from L-serine: step 1/2. This chain is Probable serine acetyltransferase 5 (SAT5), found in Oryza sativa subsp. japonica (Rice).